We begin with the raw amino-acid sequence, 1512 residues long: Sterol 3-beta-glucosyltransferase (1512 aa).

2 disordered regions span residues 22–50 (FSGS…YHSL) and 150–222 (DEHT…DTDV). Acidic residues predominate over residues 156-169 (SEEEDSADKEEESI). Positions 190–222 (TTATLITTQITRTKTATTATPTPTPTSSVDTDV) are enriched in low complexity. The 36-residue stretch at 296–331 (LQRVFDLSDEDTFCGNYSAWLIKDVLLQGHVYLTKD) folds into the GRAM 1 domain. The PH domain maps to 359–520 (SIVYSGNLGL…WCNNITKLIF (162 aa)). Residues 816–880 (RNFQSHFSTN…TDIEEVRASR (65 aa)) enclose the GRAM 2 domain. Positions 1024, 1025, 1027, 1299, 1328, 1330, 1343, 1346, 1347, 1348, 1367, and 1368 each coordinate UDP-alpha-D-glucose. The segment at 1450–1512 (YKRHHPVPSG…NNSPSQNSSN (63 aa)) is disordered. Over residues 1467–1493 (TDSDDYDDDEDDDESDKDDEEEEEENS) the composition is skewed to acidic residues. The span at 1501 to 1512 (GVNNSPSQNSSN) shows a compositional bias: polar residues.

It belongs to the glycosyltransferase 28 family.

It is found in the cytoplasm. Its subcellular location is the membrane. It carries out the reaction a sterol + UDP-alpha-D-glucose = a sterol 3-beta-D-glucoside + UDP + H(+). It catalyses the reaction ergosterol + UDP-alpha-D-glucose = ergosteryl 3-beta-D-glucoside + UDP + H(+). Sterol glycosyltransferase responsible for the glycosylation of ergosterol to form ergosterol-glucoside. This Candida albicans (strain SC5314 / ATCC MYA-2876) (Yeast) protein is Sterol 3-beta-glucosyltransferase.